The following is a 149-amino-acid chain: UPF0178 protein SERP0336 (149 aa).

The protein belongs to the UPF0178 family.

This Staphylococcus epidermidis (strain ATCC 35984 / DSM 28319 / BCRC 17069 / CCUG 31568 / BM 3577 / RP62A) protein is UPF0178 protein SERP0336.